A 69-amino-acid polypeptide reads, in one-letter code: DNA-directed RNA polymerase subunit epsilon (69 aa).

This sequence belongs to the RNA polymerase subunit epsilon family. RNAP is composed of a core of 2 alpha, a beta and a beta' subunit. The core is associated with a delta subunit, and at least one of epsilon or omega. When a sigma factor is associated with the core the holoenzyme is formed, which can initiate transcription.

It carries out the reaction RNA(n) + a ribonucleoside 5'-triphosphate = RNA(n+1) + diphosphate. A non-essential component of RNA polymerase (RNAP). The sequence is that of DNA-directed RNA polymerase subunit epsilon from Listeria monocytogenes serotype 4b (strain CLIP80459).